The chain runs to 195 residues: U8 snoRNA-decapping enzyme (195 aa).

The Nudix hydrolase domain occupies 18 to 173 (DWRHACHALL…IGAAREQLLE (156 aa)). Substrate is bound by residues His24, Arg50, and Phe57. 4 residues coordinate Mn(2+): Gly59, Glu76, Glu80, and His99. A Nudix box motif is present at residues 61-82 (FVDAQDSCLEDGLNRELREELG). Gln170 is a binding site for substrate. Glu173 is a binding site for Mn(2+).

The protein belongs to the Nudix hydrolase family. NUDT16 subfamily. In terms of assembly, homodimer. Requires Mg(2+) as cofactor. The cofactor is Mn(2+). It depends on Co(2+) as a cofactor. In terms of tissue distribution, expressed in brain, testis, spleen, lung, heart, liver, kidney and muscle (at protein level).

The protein resides in the nucleus. The protein localises to the nucleolus. It localises to the nucleoplasm. Its subcellular location is the cytoplasm. The enzyme catalyses a 5'-end (N(7)-methyl 5'-triphosphoguanosine)-ribonucleoside in mRNA + H2O = N(7)-methyl-GDP + a 5'-end phospho-ribonucleoside in mRNA + 2 H(+). The catalysed reaction is IDP + H2O = IMP + phosphate + H(+). It carries out the reaction dIDP + H2O = dIMP + phosphate + H(+). It catalyses the reaction a 5'-end NAD(+)-phospho-ribonucleoside in mRNA + H2O = a 5'-end phospho-ribonucleoside in mRNA + NAD(+) + H(+). The enzyme catalyses a 5'-end FAD-phospho-ribonucleoside in mRNA + H2O = a 5'-end phospho-adenosine-phospho-ribonucleoside in mRNA + FMN + 2 H(+). The catalysed reaction is a 5'-end CoA-ribonucleoside in mRNA + H2O = a 5'-end phospho-adenosine-phospho-ribonucleoside in mRNA + (R)-4'-phosphopantetheine + 2 H(+). In terms of biological role, RNA-binding and decapping enzyme that catalyzes the cleavage of the cap structure of snoRNAs and mRNAs in a metal-dependent manner. Part of the U8 snoRNP complex that is required for the accumulation of mature 5.8S and 28S rRNA. Has diphosphatase activity and removes m7G and/or m227G caps from U8 snoRNA and leaves a 5'monophosphate on the RNA. Also catalyzes the cleavage of the cap structure on mRNAs. Does not hydrolyze cap analog structures like 7-methylguanosine nucleoside triphosphate (m7GpppG). Also hydrolysis m7G- and m227G U3-capped RNAs but with less efficiencies. Has broad substrate specificity with manganese or cobalt as cofactor and can act on various RNA species. Binds to the U8 snoRNA; metal is not required for RNA-binding. May play a role in the regulation of snoRNAs and mRNAs degradation. Also acts as a phosphatase; hydrolyzes the non-canonical purine nucleotides inosine diphosphate (IDP) and deoxyinosine diphosphate (dITP) as well as guanosine diphosphate (GDP), deoxyguanosine diphosphate (dGDP), xanthine diphosphate (XDP), inosine triphosphate (ITP) and deoxyinosine triphosphate (ITP) to their respective monophosphate derivatives and does not distinguish between the deoxy- and ribose forms. The order of activity with different substrates is IDP &gt; dIDP &gt;&gt; GDP = dGDP &gt; XDP = ITP = dITP. Binds strongly to GTP, ITP and XTP. Participates in the hydrolysis of dIDP/IDP and probably excludes non-canonical purines from RNA and DNA precursor pools, thus preventing their incorporation into RNA and DNA and avoiding chromosomal lesions. Exhibits decapping activity towards NAD-capped RNAs and FAD-capped RNAs. Exhibits decapping activity towards dpCoA-capped RNAs in vitro. This Mus musculus (Mouse) protein is U8 snoRNA-decapping enzyme (Nudt16).